Here is a 367-residue protein sequence, read N- to C-terminus: Centromere protein L (367 aa).

It belongs to the CENP-L/IML3 family.

Its subcellular location is the nucleus. It is found in the chromosome. The protein resides in the centromere. Its function is as follows. Probable component of a centromeric complex involved in assembly of kinetochore proteins, mitotic progression and chromosome segregation. The chain is Centromere protein L (cenpl) from Danio rerio (Zebrafish).